A 125-amino-acid chain; its full sequence is MADLAKIVEDLSALTVLEAAELSKLLEEKWGVSAAAAVAVAAPGGAGAAAPAAEEKDEFDVILTGDGGNKINVIKEVRAITGLGLGEAKALVEGAPKAVKEGASKAEAEELKKKLEAAGATVELK.

The protein belongs to the bacterial ribosomal protein bL12 family. In terms of assembly, homodimer. Part of the ribosomal stalk of the 50S ribosomal subunit. Forms a multimeric L10(L12)X complex, where L10 forms an elongated spine to which 2 to 4 L12 dimers bind in a sequential fashion. Binds GTP-bound translation factors.

Functionally, forms part of the ribosomal stalk which helps the ribosome interact with GTP-bound translation factors. Is thus essential for accurate translation. In Sphingopyxis alaskensis (strain DSM 13593 / LMG 18877 / RB2256) (Sphingomonas alaskensis), this protein is Large ribosomal subunit protein bL12.